A 384-amino-acid chain; its full sequence is 1-deoxy-D-xylulose 5-phosphate reductoisomerase (384 aa).

NADPH-binding residues include Thr-11, Gly-12, Ser-13, Ile-14, Lys-38, and Asn-123. Lys-124 contacts 1-deoxy-D-xylulose 5-phosphate. Glu-125 is a binding site for NADPH. Residue Asp-148 coordinates Mn(2+). Positions 149, 150, 174, and 197 each coordinate 1-deoxy-D-xylulose 5-phosphate. Mn(2+) is bound at residue Glu-150. An NADPH-binding site is contributed by Gly-203. The 1-deoxy-D-xylulose 5-phosphate site is built by Ser-210, Asn-215, Lys-216, and Glu-219. Glu-219 is a binding site for Mn(2+).

This sequence belongs to the DXR family. The cofactor is Mg(2+). Requires Mn(2+) as cofactor.

It carries out the reaction 2-C-methyl-D-erythritol 4-phosphate + NADP(+) = 1-deoxy-D-xylulose 5-phosphate + NADPH + H(+). It participates in isoprenoid biosynthesis; isopentenyl diphosphate biosynthesis via DXP pathway; isopentenyl diphosphate from 1-deoxy-D-xylulose 5-phosphate: step 1/6. In terms of biological role, catalyzes the NADPH-dependent rearrangement and reduction of 1-deoxy-D-xylulose-5-phosphate (DXP) to 2-C-methyl-D-erythritol 4-phosphate (MEP). This Halothermothrix orenii (strain H 168 / OCM 544 / DSM 9562) protein is 1-deoxy-D-xylulose 5-phosphate reductoisomerase.